The chain runs to 151 residues: Salivary C-type lectin 2 (151 aa).

The N-terminal stretch at 1–15 is a signal peptide; sequence MKLLLSFALLGLVAC. In terms of domain architecture, C-type lectin spans 25-147; sequence YCFPNEVATW…CTSKRRFVCE (123 aa). Cystine bridges form between Cys41–Cys146 and Cys118–Cys138.

Ca(2+) is required as a cofactor. In terms of tissue distribution, expressed in female salivary gland. Not detected or low-level expression in female midgut and fat body.

The protein resides in the secreted. Functionally, salivary protein with carbohydrate-binding activity. Binds to D-mannose, D-galactose, D-glucose and maltose. Agglutinates host erythrocytes. Probably participates in mosquito innate immune responses to prevent microorganism multiplication in sugar and blood meals. In terms of biological role, (Microbial infection) Binds to the surface of and agglutinates Escherichia coli in vitro. (Microbial infection) Binds to the surface of and agglutinates Pseudomonas aeruginosa in vitro. Its function is as follows. (Microbial infection) Binds to the surface of and agglutinates Bacillus subtilis in vitro. Functionally, (Microbial infection) Agglutinates Staphylococcus aureus in vitro. In terms of biological role, (Microbial infection) Agglutinates Candida albicans in vitro. (Microbial infection) Does not affect replication of dengue virus type 2 in host cells. The sequence is that of Salivary C-type lectin 2 from Aedes albopictus (Asian tiger mosquito).